A 205-amino-acid chain; its full sequence is Beta-crystallin B2 (205 aa).

Alanine 2 is modified (N-acetylalanine). The segment at 2-16 is N-terminal arm; that stretch reads ASDHQSPATKQQQPS. Beta/gamma crystallin 'Greek key' domains lie at 17–56 and 57–101; these read SKIV…LVHS and GPWV…RPIK. Residues 102-106 are connecting peptide; sequence VDSQE. Beta/gamma crystallin 'Greek key' domains follow at residues 107–148 and 149–191; these read HKIV…RVQS and GTWV…RRIR. A C-terminal arm region spans residues 193-205; that stretch reads MQWHQRGTFHPTN.

Belongs to the beta/gamma-crystallin family. As to quaternary structure, homo/heterodimer, or complexes of higher-order. The structure of beta-crystallin oligomers seems to be stabilized through interactions between the N-terminal arms. Post-translationally, the N-terminus is blocked.

Its function is as follows. Crystallins are the dominant structural components of the vertebrate eye lens. The polypeptide is Beta-crystallin B2 (Aquarana catesbeiana (American bullfrog)).